A 457-amino-acid chain; its full sequence is uncharacterized protein (457 aa).

The 60-residue stretch at 10–69 folds into the TRAM domain; that stretch reads ALLQGQTVTVPITALAAGGDGIARLTDGRVLFVAGAVPGDTVEARLVHLKKDHGFGKILQ. Residues Cys-82, Cys-88, Cys-91, and Cys-170 each contribute to the [4Fe-4S] cluster site. Positions 294, 323, 344, and 387 each coordinate S-adenosyl-L-methionine. Residue Cys-414 is the Nucleophile of the active site.

This sequence belongs to the class I-like SAM-binding methyltransferase superfamily. RNA M5U methyltransferase family.

This is an uncharacterized protein from Gloeobacter violaceus (strain ATCC 29082 / PCC 7421).